A 966-amino-acid chain; its full sequence is SH3 domain-binding protein 4 (966 aa).

Residues 57–116 (GAAREVVAIKDCCPSSFTTLKFSKGDRLYVLDSSGAEWWYAHNNTEMGYIPAAYVEPINY) enclose the SH3 1 domain. In terms of domain architecture, ZU5 spans 322–457 (TNIVCRLDSS…LEPCMYVCVV (136 aa)). In terms of domain architecture, SH3 2 spans 657 to 727 (NNLKFGKLIK…HAKNVLVVGK (71 aa)).

In terms of assembly, homodimer or homooligomer.

Its subcellular location is the membrane. It is found in the clathrin-coated pit. The protein resides in the cytoplasmic vesicle. It localises to the clathrin-coated vesicle. The protein localises to the nucleus. Possible role in regulating endocytosis of the transferrin receptor at the plasma membrane. Alternatively, may function as a negative regulator of the amino acid-induced TOR signaling by inhibiting the formation of active Rag GTPase complexes. Preferentially binds inactive Rag GTPase complexes and prevents their interaction with the mTORC1 complex inhibiting its relocalization to lysosomes and its activation. Thereby, may indirectly regulate cell growth, proliferation and autophagy. The sequence is that of SH3 domain-binding protein 4 (sh3bp4) from Seriola quinqueradiata (Five-ray yellowtail).